The sequence spans 131 residues: Aspartate 1-decarboxylase (131 aa).

Serine 25 (schiff-base intermediate with substrate; via pyruvic acid) is an active-site residue. A Pyruvic acid (Ser) modification is found at serine 25. Threonine 57 is a substrate binding site. The active-site Proton donor is the tyrosine 58. Residue 73–75 (GSA) coordinates substrate.

It belongs to the PanD family. Heterooctamer of four alpha and four beta subunits. Pyruvate is required as a cofactor. Is synthesized initially as an inactive proenzyme, which is activated by self-cleavage at a specific serine bond to produce a beta-subunit with a hydroxyl group at its C-terminus and an alpha-subunit with a pyruvoyl group at its N-terminus.

It is found in the cytoplasm. It catalyses the reaction L-aspartate + H(+) = beta-alanine + CO2. It participates in cofactor biosynthesis; (R)-pantothenate biosynthesis; beta-alanine from L-aspartate: step 1/1. In terms of biological role, catalyzes the pyruvoyl-dependent decarboxylation of aspartate to produce beta-alanine. This Leptothrix cholodnii (strain ATCC 51168 / LMG 8142 / SP-6) (Leptothrix discophora (strain SP-6)) protein is Aspartate 1-decarboxylase.